Here is a 328-residue protein sequence, read N- to C-terminus: Isopenicillin N synthase (328 aa).

4 residues coordinate isopenicillin N: Arg-85, Tyr-89, Ser-181, and Tyr-187. 6 residues coordinate N-[(5S)-5-amino-5-carboxypentanoyl]-L-cysteinyl-D-valine: Arg-85, Tyr-89, Ser-181, Tyr-187, His-210, and Asp-212. Positions 178-284 (TLSSVSLIRY…RLSLPFFFHA (107 aa)) constitute a Fe2OG dioxygenase domain. Fe(2+) is bound by residues His-210, Asp-212, and His-266. Residue Arg-275 participates in 2-oxoglutarate binding. Residue Ser-277 coordinates isopenicillin N. Ser-277 lines the N-[(5S)-5-amino-5-carboxypentanoyl]-L-cysteinyl-D-valine pocket.

The protein belongs to the iron/ascorbate-dependent oxidoreductase family. It depends on Fe cation as a cofactor. The cofactor is L-ascorbate.

The enzyme catalyses N-[(5S)-5-amino-5-carboxypentanoyl]-L-cysteinyl-D-valine + O2 = isopenicillin N + 2 H2O. The protein operates within antibiotic biosynthesis; penicillin G biosynthesis; penicillin G from L-alpha-aminoadipate and L-cysteine and L-valine: step 2/3. Functionally, removes, in the presence of oxygen, 4 hydrogen atoms from delta-L-(alpha-aminoadipyl)-L-cysteinyl-D-valine (ACV) to form the azetidinone and thiazolidine rings of isopenicillin. This Amycolatopsis lactamdurans (Nocardia lactamdurans) protein is Isopenicillin N synthase (pcbC).